Here is a 1818-residue protein sequence, read N- to C-terminus: U3 small nucleolar RNA-associated protein 10 (1818 aa).

The helical transmembrane segment at 568–588 threads the bilayer; the sequence is TDFYLLIPLILLALFDNSKLI. The stretch at 1778-1816 is one HEAT repeat; it reads LVPYIAELLEDDDEEVEMEVRRGLVRVIENVLGEPLDRY.

It belongs to the HEATR1/UTP10 family. In terms of assembly, component of the ribosomal small subunit (SSU) processome.

It localises to the nucleus. The protein resides in the nucleolus. The protein localises to the membrane. Involved in nucleolar processing of pre-18S ribosomal RNA. Involved in ribosome biosynthesis. This is U3 small nucleolar RNA-associated protein 10 from Candida albicans (strain SC5314 / ATCC MYA-2876) (Yeast).